Here is a 446-residue protein sequence, read N- to C-terminus: Chromogranin-A (446 aa).

Positions 1 to 16 are cleaved as a signal peptide; that stretch reads SAAALALLLCAGQVIA. Cysteine 33 and cysteine 54 are joined by a disulfide. The interval 85–426 is disordered; the sequence is AKERSHQQKK…RPEDQELESL (342 aa). Position 97 is a phosphoserine (serine 97). The segment covering 105–138 has biased composition (basic and acidic residues); that stretch reads VLEKQNDQAELKEGTEEASSKEAAEKRGDSKEVE. Acidic residues predominate over residues 160–171; sequence EAEDQTPGEEEA. At serine 209 the chain carries Phosphoserine. Positions 226-243 are enriched in basic and acidic residues; it reads AGEKAVPEEEGPRSEAFD. Position 286 is a phosphoserine (serine 286). Glycine 304 bears the Glycine amide mark. At serine 319 the chain carries Phosphoserine. The segment covering 319–346 has biased composition (basic and acidic residues); it reads SEEWENAKRWSKMDRLAKELTAEKRLQG. Over residues 347–357 the composition is skewed to acidic residues; the sequence is EEEEEEEEEDP. Serine 360 is modified (phosphoserine). At methionine 361 the chain carries Methionine sulfoxide. A phosphoserine mark is found at serine 387, serine 391, serine 413, and serine 427. The segment covering 403–420 has biased composition (basic and acidic residues); it reads YLEEKKEEEGSANRRPED. Serine 413 carries an O-linked (Xyl...) (chondroitin sulfate) serine glycan.

This sequence belongs to the chromogranin/secretogranin protein family. Self-interacts; self-assembly is promoted in vitro by chondroitin sulfate attachment which occurs at mildly acidic pH conditions. Interacts with SCG3. Interacts with ITPR1 in the secretory granules. O-glycosylated; contains chondroitin sulfate (CS). CS attachment is pH-dependent, being observed at mildly acidic conditions of pH 5 but not at neutral pH, and promotes self-assembly in vitro. In terms of processing, parathyroid CHGA is sulfated on tyrosine residues, whereas adrenal CHGA seems to be mainly sulfated on oligosaccharide residues.

The protein resides in the secreted. The protein localises to the cytoplasmic vesicle. It localises to the secretory vesicle. It is found in the neuronal dense core vesicle. Functionally, strongly inhibits glucose induced insulin release from the pancreas. In terms of biological role, inhibits low calcium-stimulated parathyroid cell secretion. Its function is as follows. Inhibits catecholamine release from chromaffin cells and noradrenergic neurons by acting as a non-competitive nicotinic cholinergic antagonist. Can induce mast cell migration, degranulation and production of cytokines and chemokines. Regulates granule biogenesis in endocrine cells by up-regulating the transcription of protease nexin 1 (SERPINE2) via a cAMP-PKA-SP1 pathway. This leads to inhibition of granule protein degradation in the Golgi complex which in turn promotes granule formation. This Sus scrofa (Pig) protein is Chromogranin-A (CHGA).